Here is a 180-residue protein sequence, read N- to C-terminus: uncharacterized protein (180 aa).

Over residues 114–136 the composition is skewed to basic and acidic residues; sequence DKISESDSLPDEYKEYVVKHDSD. A disordered region spans residues 114-180; that stretch reads DKISESDSLP…NFDNPDDNPK (67 aa). Over residues 137-146 the composition is skewed to acidic residues; sequence NSDNDSDNSD. Low complexity predominate over residues 147–173; it reads NDSNNSDNDSNNSDSDSDNSNDPNNFD.

This is an uncharacterized protein from Acanthamoeba polyphaga (Amoeba).